The sequence spans 474 residues: Protein nucleotidyltransferase YdiU (474 aa).

ATP-binding residues include Gly-89, Gly-91, Arg-92, Lys-112, Asp-124, Gly-125, Arg-175, and Arg-182. The Proton acceptor role is filled by Asp-256. Mg(2+) contacts are provided by Asn-257 and Asp-266. Asp-266 serves as a coordination point for ATP.

This sequence belongs to the SELO family. Mg(2+) is required as a cofactor. Requires Mn(2+) as cofactor.

It catalyses the reaction L-seryl-[protein] + ATP = 3-O-(5'-adenylyl)-L-seryl-[protein] + diphosphate. The enzyme catalyses L-threonyl-[protein] + ATP = 3-O-(5'-adenylyl)-L-threonyl-[protein] + diphosphate. The catalysed reaction is L-tyrosyl-[protein] + ATP = O-(5'-adenylyl)-L-tyrosyl-[protein] + diphosphate. It carries out the reaction L-histidyl-[protein] + UTP = N(tele)-(5'-uridylyl)-L-histidyl-[protein] + diphosphate. It catalyses the reaction L-seryl-[protein] + UTP = O-(5'-uridylyl)-L-seryl-[protein] + diphosphate. The enzyme catalyses L-tyrosyl-[protein] + UTP = O-(5'-uridylyl)-L-tyrosyl-[protein] + diphosphate. Functionally, nucleotidyltransferase involved in the post-translational modification of proteins. It can catalyze the addition of adenosine monophosphate (AMP) or uridine monophosphate (UMP) to a protein, resulting in modifications known as AMPylation and UMPylation. This is Protein nucleotidyltransferase YdiU from Corynebacterium glutamicum (strain ATCC 13032 / DSM 20300 / JCM 1318 / BCRC 11384 / CCUG 27702 / LMG 3730 / NBRC 12168 / NCIMB 10025 / NRRL B-2784 / 534).